The primary structure comprises 719 residues: Phenylalanine--tRNA ligase beta subunit, chloroplastic (719 aa).

In terms of domain architecture, B5 spans 318–403; that stretch reads DHALNINLSI…RIYGYHKFRS (86 aa). Mg(2+)-binding residues include Asp381, Asp387, Glu390, and Glu391. One can recognise an FDX-ACB domain in the interval 625–718; it reads SKYPSIIRDL…IVKQLNLKIR (94 aa).

It belongs to the phenylalanyl-tRNA synthetase beta subunit family. Type 1 subfamily. Tetramer of two alpha and two beta subunits. Mg(2+) serves as cofactor.

It is found in the plastid. The protein localises to the chloroplast. It carries out the reaction tRNA(Phe) + L-phenylalanine + ATP = L-phenylalanyl-tRNA(Phe) + AMP + diphosphate + H(+). The protein is Phenylalanine--tRNA ligase beta subunit, chloroplastic of Pyropia yezoensis (Susabi-nori).